We begin with the raw amino-acid sequence, 401 residues long: Coenzyme A biosynthesis bifunctional protein CoaBC (401 aa).

Residues 1–190 form a phosphopantothenoylcysteine decarboxylase region; it reads MQTLAGKKIL…FQPKPLQDKS (190 aa). Cys159 acts as the Proton donor in catalysis. The phosphopantothenate--cysteine ligase stretch occupies residues 191–401; the sequence is ILITAGPTRE…LKQIQTLMGH (211 aa). CTP contacts are provided by residues Asp279, Lys289, 307-310, Phe326, Lys340, and Lys344; that span reads PDIV.

It in the N-terminal section; belongs to the HFCD (homo-oligomeric flavin containing Cys decarboxylase) superfamily. This sequence in the C-terminal section; belongs to the PPC synthetase family. Requires Mg(2+) as cofactor. The cofactor is FMN.

The enzyme catalyses N-[(R)-4-phosphopantothenoyl]-L-cysteine + H(+) = (R)-4'-phosphopantetheine + CO2. The catalysed reaction is (R)-4'-phosphopantothenate + L-cysteine + CTP = N-[(R)-4-phosphopantothenoyl]-L-cysteine + CMP + diphosphate + H(+). It functions in the pathway cofactor biosynthesis; coenzyme A biosynthesis; CoA from (R)-pantothenate: step 2/5. The protein operates within cofactor biosynthesis; coenzyme A biosynthesis; CoA from (R)-pantothenate: step 3/5. Its function is as follows. Catalyzes two sequential steps in the biosynthesis of coenzyme A. In the first step cysteine is conjugated to 4'-phosphopantothenate to form 4-phosphopantothenoylcysteine. In the second step the latter compound is decarboxylated to form 4'-phosphopantotheine. This chain is Coenzyme A biosynthesis bifunctional protein CoaBC, found in Vibrio vulnificus (strain CMCP6).